The chain runs to 338 residues: Fructose-1,6-bisphosphatase class 1 1 (338 aa).

Residues glutamate 94, aspartate 116, leucine 118, and aspartate 119 each contribute to the Mg(2+) site. Substrate-binding positions include 119–122 (DGSS), asparagine 210, and lysine 276. Glutamate 282 is a binding site for Mg(2+).

Belongs to the FBPase class 1 family. As to quaternary structure, homotetramer. It depends on Mg(2+) as a cofactor.

It is found in the cytoplasm. The catalysed reaction is beta-D-fructose 1,6-bisphosphate + H2O = beta-D-fructose 6-phosphate + phosphate. Its pathway is carbohydrate biosynthesis; gluconeogenesis. This chain is Fructose-1,6-bisphosphatase class 1 1, found in Paraburkholderia xenovorans (strain LB400).